The following is a 540-amino-acid chain: MRIEYVDSFYSQPFPGTYMRDFGQVKHFFEYNPHQLQEYKTRCEHELALPKEHLVALAENLKDFNQGLGCGEKTLHNIELLDQGKALTVVTGQQPGILTGPLYTIYKAMGTIGLAEKLSKELNRKVIPVFWIGADDHDHEEINHIFIPTAKGPKRITLAGKPAGRISVGNIPIPDIALLLEELEDLLPPIGWKNQGIELIKRTAHEAANLAEWFGKLMTFLFKDYGLVFINPVLPQVRAITASLFYKVVTTAPAVNQLLQASCQQMLGCGYTPQVQGEKDKLHLFWYNEHGYREALYYKKGLISNKDGTRTWTKGQLGELCLTNPAKFSPDVVMRPVVQEKLLPVLAYVAGPGEISYYALLKRIFHYFAMKMPVIYPRPNITVIEPLIKRLITKYQVPLSCLTYGLEEFIENYLQQEDQLGIETVFNELRGTLKEKQGEVVKKLSILDPDIEGMGKENLKRLIRVVNSFEEKVKQRHRKNNQVAIQQLQKIQHMTQPMGQWQERVYNIFPYVMKYGPGIIKEMYHLIEISDWRQKIIFFD.

Residues 455–491 (GKENLKRLIRVVNSFEEKVKQRHRKNNQVAIQQLQKI) are a coiled coil.

This sequence belongs to the BshC family.

Its function is as follows. Involved in bacillithiol (BSH) biosynthesis. May catalyze the last step of the pathway, the addition of cysteine to glucosamine malate (GlcN-Mal) to generate BSH. This chain is Putative cysteine ligase BshC, found in Desulforamulus reducens (strain ATCC BAA-1160 / DSM 100696 / MI-1) (Desulfotomaculum reducens).